Consider the following 537-residue polypeptide: Putative cysteine ligase BshC (537 aa).

A coiled-coil region spans residues 422 to 450 (IEKVEGMIEQQRRLNKDLLDEVAGNQNNI).

This sequence belongs to the BshC family.

In terms of biological role, involved in bacillithiol (BSH) biosynthesis. May catalyze the last step of the pathway, the addition of cysteine to glucosamine malate (GlcN-Mal) to generate BSH. In Staphylococcus aureus (strain USA300), this protein is Putative cysteine ligase BshC.